The following is a 37-amino-acid chain: Cytochrome b6-f complex subunit 5 (37 aa).

Residues 5-25 form a helical membrane-spanning segment; it reads LLSGIVLGLIVVTLAGLFYAA.

The protein belongs to the PetG family. The 4 large subunits of the cytochrome b6-f complex are cytochrome b6, subunit IV (17 kDa polypeptide, PetD), cytochrome f and the Rieske protein, while the 4 small subunits are PetG, PetL, PetM and PetN. The complex functions as a dimer.

Its subcellular location is the cellular thylakoid membrane. Its function is as follows. Component of the cytochrome b6-f complex, which mediates electron transfer between photosystem II (PSII) and photosystem I (PSI), cyclic electron flow around PSI, and state transitions. PetG is required for either the stability or assembly of the cytochrome b6-f complex. This Anabaena variabilis protein is Cytochrome b6-f complex subunit 5.